The following is a 257-amino-acid chain: Acetylglutamate kinase (257 aa).

Substrate is bound by residues 43 to 44 (GG), Arg-65, and Asn-157. ATP contacts are provided by residues 180–185 (DVSGIL) and 208–210 (IIT).

Belongs to the acetylglutamate kinase family. ArgB subfamily. In terms of assembly, homodimer.

It localises to the cytoplasm. It catalyses the reaction N-acetyl-L-glutamate + ATP = N-acetyl-L-glutamyl 5-phosphate + ADP. Its pathway is amino-acid biosynthesis; L-arginine biosynthesis; N(2)-acetyl-L-ornithine from L-glutamate: step 2/4. Functionally, catalyzes the ATP-dependent phosphorylation of N-acetyl-L-glutamate. The chain is Acetylglutamate kinase from Edwardsiella ictaluri (strain 93-146).